Consider the following 223-residue polypeptide: Small ribosomal subunit protein uS11m (223 aa).

Residues 1-38 (MVLKHSVTYNLSFFISFTFSSIFFSSLILFLVYKSVLS) constitute a mitochondrion transit peptide.

Belongs to the universal ribosomal protein uS11 family. As to quaternary structure, component of the mitochondrial small ribosomal subunit (mt-SSU). Mature yeast 74S mitochondrial ribosomes consist of a small (37S) and a large (54S) subunit. The 37S small subunit contains a 15S ribosomal RNA (15S mt-rRNA) and at least 32 different proteins. The 54S large subunit contains a 21S rRNA (21S mt-rRNA) and at least 45 different proteins.

Its subcellular location is the mitochondrion. Component of the mitochondrial ribosome (mitoribosome), a dedicated translation machinery responsible for the synthesis of mitochondrial genome-encoded proteins, including at least some of the essential transmembrane subunits of the mitochondrial respiratory chain. The mitoribosomes are attached to the mitochondrial inner membrane and translation products are cotranslationally integrated into the membrane. This chain is Small ribosomal subunit protein uS11m (mrps18), found in Schizosaccharomyces pombe (strain 972 / ATCC 24843) (Fission yeast).